The following is a 167-amino-acid chain: Low molecular mass early light-inducible protein HV60, chloroplastic (167 aa).

The N-terminal 33 residues, 1-33 (MATMMAMSSFAGAAVLPRGSARSLPALGRRTLV), are a transit peptide targeting the chloroplast. 2 consecutive transmembrane segments (helical) span residues 101–121 (GQAWFAYTVAMLSMASLVPLL) and 145–165 (FAMIGLVALAATEIITGTPFI).

This sequence belongs to the ELIP/psbS family.

It is found in the plastid. The protein localises to the chloroplast membrane. In terms of biological role, probably involved in the integration of pigments into the mature pigment-protein complexes. The sequence is that of Low molecular mass early light-inducible protein HV60, chloroplastic from Hordeum vulgare (Barley).